The primary structure comprises 530 residues: Ubiquitin carboxyl-terminal hydrolase 17-like protein 21 (530 aa).

In terms of domain architecture, USP spans Ala-80–Lys-375. Cys-89 acts as the Nucleophile in catalysis. His-334 (proton acceptor) is an active-site residue. Basic and acidic residues-rich tracts occupy residues Ser-382–Arg-392 and Asp-398–His-412. Disordered regions lie at residues Ser-382–His-412 and Asn-477–Gln-530. A compositionally biased stretch (polar residues) spans Thr-493–Leu-505. Residues Gly-510–Arg-524 show a composition bias toward basic residues.

This sequence belongs to the peptidase C19 family. USP17 subfamily.

The protein resides in the nucleus. Its subcellular location is the endoplasmic reticulum. It carries out the reaction Thiol-dependent hydrolysis of ester, thioester, amide, peptide and isopeptide bonds formed by the C-terminal Gly of ubiquitin (a 76-residue protein attached to proteins as an intracellular targeting signal).. Deubiquitinating enzyme that removes conjugated ubiquitin from specific proteins to regulate different cellular processes that may include cell proliferation, progression through the cell cycle, apoptosis, cell migration, and the cellular response to viral infection. The chain is Ubiquitin carboxyl-terminal hydrolase 17-like protein 21 (USP17L21) from Homo sapiens (Human).